A 159-amino-acid chain; its full sequence is Small ribosomal subunit protein uS9 (159 aa).

Belongs to the universal ribosomal protein uS9 family.

This chain is Small ribosomal subunit protein uS9, found in Rickettsia rickettsii (strain Iowa).